We begin with the raw amino-acid sequence, 556 residues long: Polypeptide N-acetylgalactosaminyltransferase 13 (556 aa).

Over 1-4 (MRRF) the chain is Cytoplasmic. A helical; Signal-anchor for type II membrane protein transmembrane segment spans residues 5–27 (VYCKVVLATSLMWVLVDVFLLLY). Residues 28–556 (FSECNKCDDK…WLLRNMTLGT (529 aa)) are Lumenal-facing. Residues N94 and N116 are each glycosylated (N-linked (GlcNAc...) asparagine). 5 cysteine pairs are disulfide-bonded: C105–C338, C329–C407, C441–C458, C481–C496, and C522–C539. Positions 114–224 (LPNTSVVIVF…LGWLEPLLAR (111 aa)) are catalytic subdomain A. 2 residues coordinate substrate: D155 and R185. Residues D208 and H210 each contribute to the Mn(2+) site. The interval 284–346 (PVRTPTMAGG…TCSHVGHVFR (63 aa)) is catalytic subdomain B. A substrate-binding site is contributed by W315. Residue H343 participates in Mn(2+) binding. Residues R346 and Y351 each coordinate substrate. Residues 428–550 (YSLGEIRNVE…GSRSQQWLLR (123 aa)) form the Ricin B-type lectin domain. The N-linked (GlcNAc...) asparagine glycan is linked to N551.

The protein belongs to the glycosyltransferase 2 family. GalNAc-T subfamily. Requires Mn(2+) as cofactor. As to expression, specifically expressed in neuronal cells. Not expressed in glial cells such as astrocytes. Expressed at low level.

It localises to the golgi apparatus membrane. It carries out the reaction L-seryl-[protein] + UDP-N-acetyl-alpha-D-galactosamine = a 3-O-[N-acetyl-alpha-D-galactosaminyl]-L-seryl-[protein] + UDP + H(+). It catalyses the reaction L-threonyl-[protein] + UDP-N-acetyl-alpha-D-galactosamine = a 3-O-[N-acetyl-alpha-D-galactosaminyl]-L-threonyl-[protein] + UDP + H(+). It functions in the pathway protein modification; protein glycosylation. Its function is as follows. Catalyzes the initial reaction in O-linked oligosaccharide biosynthesis, the transfer of an N-acetyl-D-galactosamine (GalNAc) residue from UDP-GalNAc to a serine or threonine residue on the protein receptor. Generates GalNAc-O-Ser/Thr structure also known as Tn antigen, which itself is immunogenic but also serves as a precursor for the synthesis of different mucin-type O-glycan core structures. Contributes to the synthesis of O-linked glycans on mucins and proteoglycans of the central nervous system. Can glycosylate both unmodified peptides and glycopeptides that already contain an O-linked GalNAc sugar. Transfers GalNAc to Thr-/Ser-rich tandem repeats GTTPSPVPTTSTTSAP of MUC5AC. Transfers GalNAc to three consecutive serine/threonine residues on SDC3 forming a triplet-Tn epitope expressed in Purkinje cells of the developing brain. May promote neurogenesis through glycosylation and stabilization of PDPN. The chain is Polypeptide N-acetylgalactosaminyltransferase 13 (Galnt13) from Mus musculus (Mouse).